Consider the following 345-residue polypeptide: Glycerol-3-phosphate dehydrogenase [NAD(P)+] (345 aa).

Residues Ser-11, Trp-12, Arg-32, Arg-33, and Lys-105 each contribute to the NADPH site. 3 residues coordinate sn-glycerol 3-phosphate: Lys-105, Gly-136, and Ser-138. NADPH is bound at residue Ala-140. Lys-191, Asp-244, Ser-254, Arg-255, and Asn-256 together coordinate sn-glycerol 3-phosphate. The active-site Proton acceptor is Lys-191. Arg-255 contacts NADPH. Residues Val-279 and Glu-281 each contribute to the NADPH site.

The protein belongs to the NAD-dependent glycerol-3-phosphate dehydrogenase family.

Its subcellular location is the cytoplasm. It catalyses the reaction sn-glycerol 3-phosphate + NAD(+) = dihydroxyacetone phosphate + NADH + H(+). The enzyme catalyses sn-glycerol 3-phosphate + NADP(+) = dihydroxyacetone phosphate + NADPH + H(+). Its pathway is membrane lipid metabolism; glycerophospholipid metabolism. Functionally, catalyzes the reduction of the glycolytic intermediate dihydroxyacetone phosphate (DHAP) to sn-glycerol 3-phosphate (G3P), the key precursor for phospholipid synthesis. The chain is Glycerol-3-phosphate dehydrogenase [NAD(P)+] from Halalkalibacterium halodurans (strain ATCC BAA-125 / DSM 18197 / FERM 7344 / JCM 9153 / C-125) (Bacillus halodurans).